The primary structure comprises 341 residues: Ribonucleoside-diphosphate reductase small chain A (341 aa).

The disordered stretch occupies residues 1–20 (MGSLKEGQGRDMEEGESEEP). Residues Asp-87, Glu-118, and His-121 each contribute to the Fe cation site. Tyr-125 is an active-site residue. The Fe cation site is built by Glu-180, Glu-214, and His-217.

Belongs to the ribonucleoside diphosphate reductase small chain family. Homodimer and heterodimer with TSO2. Heterotetramer of two R1 and two R2 chains. A radical transfer pathway may occur between Tyr-125 of protein R2 and R1. Homodimer contains a dinuclear non-heme iron center and a stable tyrosyl radical essential for activity. A transfer pathway may occur between Tyr-125 of protein R2 and R1. Interacts with CSN7. Fe cation is required as a cofactor. In terms of tissue distribution, expressed in rosette leaves, cauline leaves, stems and flowers.

The protein resides in the cytoplasm. The enzyme catalyses a 2'-deoxyribonucleoside 5'-diphosphate + [thioredoxin]-disulfide + H2O = a ribonucleoside 5'-diphosphate + [thioredoxin]-dithiol. Its activity is regulated as follows. Inhibited by phenol, paracetamol, 2,4,6-trimethylphenol, resveratrol, furfuryl mercaptan, 2-thiophenthiol, phenylhydrazine, and hydroxyurea. Its function is as follows. Provides the precursors necessary for DNA synthesis. Catalyzes the biosynthesis of deoxyribonucleotides from the corresponding ribonucleotides. In Arabidopsis thaliana (Mouse-ear cress), this protein is Ribonucleoside-diphosphate reductase small chain A (RNR2A).